The chain runs to 352 residues: Photosystem II D2 protein (352 aa).

The helical transmembrane segment at 40-60 threads the bilayer; that stretch reads CAYLALGGWLTGTTFVTSWYT. H117 is a chlorophyll a binding site. The chain crosses the membrane as a helical span at residues 124-140; that stretch reads GFMLRQFEIAQSVRLRP. Q129 and N142 together coordinate pheophytin a. A helical transmembrane segment spans residues 152-165; that stretch reads VFVSVFLIYPLGQS. Position 197 (H197) interacts with chlorophyll a. A helical transmembrane segment spans residues 207–227; the sequence is AALLCAIHGATVENTLFEDGD. Positions 214 and 261 each coordinate a plastoquinone. H214 provides a ligand contact to Fe cation. H268 provides a ligand contact to Fe cation. Residues 278-294 form a helical membrane-spanning segment; that stretch reads GLWMSALGVVGLALNLR.

It belongs to the reaction center PufL/M/PsbA/D family. As to quaternary structure, PSII is composed of 1 copy each of membrane proteins PsbA, PsbB, PsbC, PsbD, PsbE, PsbF, PsbH, PsbI, PsbJ, PsbK, PsbL, PsbM, PsbT, PsbY, PsbZ, Psb30/Ycf12, at least 3 peripheral proteins of the oxygen-evolving complex and a large number of cofactors. It forms dimeric complexes. It depends on The D1/D2 heterodimer binds P680, chlorophylls that are the primary electron donor of PSII, and subsequent electron acceptors. It shares a non-heme iron and each subunit binds pheophytin, quinone, additional chlorophylls, carotenoids and lipids. There is also a Cl(-1) ion associated with D1 and D2, which is required for oxygen evolution. The PSII complex binds additional chlorophylls, carotenoids and specific lipids. as a cofactor.

Its subcellular location is the plastid. It is found in the chloroplast thylakoid membrane. The catalysed reaction is 2 a plastoquinone + 4 hnu + 2 H2O = 2 a plastoquinol + O2. In terms of biological role, photosystem II (PSII) is a light-driven water:plastoquinone oxidoreductase that uses light energy to abstract electrons from H(2)O, generating O(2) and a proton gradient subsequently used for ATP formation. It consists of a core antenna complex that captures photons, and an electron transfer chain that converts photonic excitation into a charge separation. The D1/D2 (PsbA/PsbD) reaction center heterodimer binds P680, the primary electron donor of PSII as well as several subsequent electron acceptors. D2 is needed for assembly of a stable PSII complex. In Bigelowiella natans (Pedinomonas minutissima), this protein is Photosystem II D2 protein.